We begin with the raw amino-acid sequence, 201 residues long: Small ribosomal subunit protein uS4 (201 aa).

In terms of domain architecture, S4 RNA-binding spans 91-157; that stretch reads SRLDNVIYRA…VPFQIARETV (67 aa).

Belongs to the universal ribosomal protein uS4 family. As to quaternary structure, part of the 30S ribosomal subunit. Contacts protein S5. The interaction surface between S4 and S5 is involved in control of translational fidelity.

Its function is as follows. One of the primary rRNA binding proteins, it binds directly to 16S rRNA where it nucleates assembly of the body of the 30S subunit. In terms of biological role, with S5 and S12 plays an important role in translational accuracy. The polypeptide is Small ribosomal subunit protein uS4 (Mycobacterium leprae (strain Br4923)).